The following is a 108-amino-acid chain: MPRAAKSSRKKDPNTPKRNMSAFMFFSIENREKMKTDNPDATFGQLGSLLGKRWKELTSTEREPYEEKARQDKERYERERKEYDTKLANGEKTGKASAPAAAAAAKEE.

Disordered regions lie at residues 1-20 and 61-108; these read MPRAAKSSRKKDPNTPKRNM and EREP…AKEE. The segment at residues 16-84 is a DNA-binding region (HMG box); that stretch reads PKRNMSAFMF…RYERERKEYD (69 aa). Residues 61-85 show a composition bias toward basic and acidic residues; that stretch reads EREPYEEKARQDKERYERERKEYDT. Residues 96 to 108 are compositionally biased toward low complexity; that stretch reads ASAPAAAAAAKEE.

The protein belongs to the NHP6 family. In terms of assembly, weakly associates with the stable spt16-pob3 heterodimer to form the FACT complex.

The protein localises to the nucleus. It localises to the chromosome. DNA-binding protein that induces severe bending of DNA. Required for DNA-binding by the FACT complex, a general chromatin factor that acts to reorganize nucleosomes. The FACT complex is involved in multiple processes that require DNA as a template such as mRNA elongation, DNA replication and DNA repair. Also augments the fidelity of transcription by RNA polymerase III independently of any role in the FACT complex. In Schizosaccharomyces pombe (strain 972 / ATCC 24843) (Fission yeast), this protein is Non-histone chromosomal protein 6 (nhp6).